Here is a 72-residue protein sequence, read N- to C-terminus: UPF0352 protein SO_2176 (72 aa).

It belongs to the UPF0352 family.

The sequence is that of UPF0352 protein SO_2176 from Shewanella oneidensis (strain ATCC 700550 / JCM 31522 / CIP 106686 / LMG 19005 / NCIMB 14063 / MR-1).